Consider the following 201-residue polypeptide: tRNA (guanine-N(7)-)-methyltransferase (201 aa).

S-adenosyl-L-methionine-binding residues include E33, E58, D85, and D106. D106 is a catalytic residue. Residues K110, D142, and 180–183 (TTYE) contribute to the substrate site.

The protein belongs to the class I-like SAM-binding methyltransferase superfamily. TrmB family.

It carries out the reaction guanosine(46) in tRNA + S-adenosyl-L-methionine = N(7)-methylguanosine(46) in tRNA + S-adenosyl-L-homocysteine. The protein operates within tRNA modification; N(7)-methylguanine-tRNA biosynthesis. Functionally, catalyzes the formation of N(7)-methylguanine at position 46 (m7G46) in tRNA. The protein is tRNA (guanine-N(7)-)-methyltransferase of Mesomycoplasma hyopneumoniae (strain 7448) (Mycoplasma hyopneumoniae).